The sequence spans 296 residues: MENNAAEIYGKFIINLARYIPPGTMIDTDFRDCMSRQMKLPPLYTSASKNVYDMTKALQNRGLISSKSIDQLFSAMIKYPTLHDVMKNTFVLAEQLLTEEENIASLSLLSLEDKASTPPPKEPTLSETVKELKDLIRTVADEHMKMKREHEAAMKELTLLINNQKQQQQQPVPMPRNSTATRPKNLAIPPRPLTNQYVCEGNKVKYIIKRGQDFVKFFDYIEDDVVKTPKFLYFLKKRFNIDLTNEQARSIHMGLIFQPIYNIDGDVTEIIKMIHDLGELSVYDRLLNEYVDKIVQ.

Positions 129–170 (VKELKDLIRTVADEHMKMKREHEAAMKELTLLINNQKQQQQQ) form a coiled coil. Positions 165-187 (KQQQQQPVPMPRNSTATRPKNLA) are disordered.

This is an uncharacterized protein from Ostreid herpesvirus 1 (isolate France) (OsHV-1).